The chain runs to 513 residues: Glutamyl-tRNA(Gln) amidotransferase subunit B, mitochondrial (513 aa).

The protein belongs to the GatB/GatE family. GatB subfamily. Subunit of the heterotrimeric GatFAB amidotransferase (AdT) complex, composed of A, B and F subunits.

Its subcellular location is the mitochondrion. It carries out the reaction L-glutamyl-tRNA(Gln) + L-glutamine + ATP + H2O = L-glutaminyl-tRNA(Gln) + L-glutamate + ADP + phosphate + H(+). Allows the formation of correctly charged Gln-tRNA(Gln) through the transamidation of misacylated Glu-tRNA(Gln) in the mitochondria. The reaction takes place in the presence of glutamine and ATP through an activated gamma-phospho-Glu-tRNA(Gln). In Debaryomyces hansenii (strain ATCC 36239 / CBS 767 / BCRC 21394 / JCM 1990 / NBRC 0083 / IGC 2968) (Yeast), this protein is Glutamyl-tRNA(Gln) amidotransferase subunit B, mitochondrial.